The primary structure comprises 348 residues: MIGKRKEEHIRIAENEDVSSFHNFWDDISLMHEADPEVNYDEIDTSVDFLGKKLKFPMIISSMTGGAEIAKNINRNLAVAAERFGIGMGVGSMRAAIVDRSIEDTYSVINESHVPLKIANIGAPQLVRQDKDAVSNRDIAYIYDLIKADFLAVHFNFLQEMVQPEGDRNSKGVIDRIKDLSGSFNIIAKETGSGFSRRTAERLIDAGVKAIEVSGVSGTTFAAVEYYRARKENNLEKMRIGETFWNWGIPSPASVYYCSDLAPVIGSGGLRNGLDLAKAIAMGATAGGFARSLLKDADTDPEMLMKNIELIQREFRVALFLTGNKNVYELKFTKKVIVDPLRSWLEAK.

A substrate-binding site is contributed by 5–6; sequence RK. FMN contacts are provided by residues Ser-61, 62-64, Ser-92, and Asn-120; that span reads SMT. 92-94 lines the substrate pocket; the sequence is SMR. Residue Gln-159 participates in substrate binding. Glu-160 lines the Mg(2+) pocket. FMN-binding positions include Lys-189, Ser-214, Thr-219, 269–271, and 290–291; these read GLR and AR.

The protein belongs to the IPP isomerase type 2 family. In terms of assembly, homooctamer. Dimer of tetramers. It depends on FMN as a cofactor. NADPH is required as a cofactor. Requires Mg(2+) as cofactor.

Its subcellular location is the cytoplasm. It carries out the reaction isopentenyl diphosphate = dimethylallyl diphosphate. Involved in the biosynthesis of isoprenoids. Catalyzes the 1,3-allylic rearrangement of the homoallylic substrate isopentenyl (IPP) to its allylic isomer, dimethylallyl diphosphate (DMAPP). The sequence is that of Isopentenyl-diphosphate delta-isomerase from Thermoplasma acidophilum (strain ATCC 25905 / DSM 1728 / JCM 9062 / NBRC 15155 / AMRC-C165).